We begin with the raw amino-acid sequence, 336 residues long: Inactive serine/threonine-protein kinase BKN2 (336 aa).

Positions 1-25 (MGNCLKPLKEQPPSASPKPLTIPSS) are disordered. Residue Gly-2 is the site of N-myristoyl glycine attachment. Cys-4 carries S-palmitoyl cysteine lipidation. A Protein kinase domain is found at 52–332 (YMVIKGNDNG…QVFDGLNDIA (281 aa)).

This sequence belongs to the protein kinase superfamily. Ser/Thr protein kinase family. As to quaternary structure, component of an immune signaling complex made of, at least, SZE1, BKN2/SZE2, ZAR1 and ZED1. Interacts directly with ZAR1 and Pseudomonas syringae HOPZ1A at the plasma membrane. In terms of processing, N-terminal myristoylation is critical for plasma membrane localization and implication in defense responses. Expressed in stigma and ovaries in flowers, and in stems and seedlings.

The protein localises to the cell membrane. Together with SZE1 and ZED1, required for effector-triggered immunity (e.g. Pseudomonas syringae type III effector HopZ1a) via the activation of ZAR1, thus being essential for resistance against P. syringae pv. tomato DC3000 expressing HopZ1a. Collaboratively with BKN1, involved in compatible pollen-stigma interactions. The chain is Inactive serine/threonine-protein kinase BKN2 from Arabidopsis thaliana (Mouse-ear cress).